Here is a 710-residue protein sequence, read N- to C-terminus: Putative membrane protein IgaA homolog (710 aa).

A topological domain (periplasmic) is located at residue M1. Residues 2-22 form a helical membrane-spanning segment; it reads STILIFIAALLACSLLAIWRF. Over 23 to 204 the chain is Cytoplasmic; that stretch reads RVKSRRGSLP…YALSRPAGLR (182 aa). 2 consecutive transmembrane segments (helical) span residues 205–225 and 226–246; these read EALLIVASFLLFFFCLITPDV and FVPWMIGGAILLLAAGLWGLF. Topologically, residues 247 to 339 are cytoplasmic; it reads APPSKSALRE…KNFPLQHWLR (93 aa). A helical membrane pass occupies residues 340 to 360; the sequence is STVIAIGSLLVLFMLLFWIPL. Over 361 to 656 the chain is Periplasmic; sequence DMPIKFTLSW…PDKSGWWRYL (296 aa). Residues 657–677 traverse the membrane as a helical segment; sequence GTTLLMLAMIVSAVYNGIQAF. At 678–710 the chain is on the cytoplasmic side; that stretch reads RRYQRHRTRMADIQEYYESCLNPRLTVSPENLI.

It belongs to the IgaA family.

Its subcellular location is the cell inner membrane. This Salmonella typhi protein is Putative membrane protein IgaA homolog (yrfF).